A 502-amino-acid chain; its full sequence is Membrane-bound lytic murein transglycosylase F (502 aa).

The N-terminal stretch at 1–33 is a signal peptide; that stretch reads MSRFISTFRSSSAQLSIVLAVILATGCSQPTTL. Residues 34 to 264 form a non-LT domain region; the sequence is QEIREEGVLH…QLAERFYGHL (231 aa). An LT domain region spans residues 265–502; sequence DRLNYVGART…PELRLIPPTL (238 aa). The active site involves Glu-311. The disordered stretch occupies residues 457-502; the sequence is PSASGLEDQLAWLGDNEAGPEAPAKESQPDLRADLPPELRLIPPTL. Positions 479–493 are enriched in basic and acidic residues; the sequence is PAKESQPDLRADLPP.

It in the N-terminal section; belongs to the bacterial solute-binding protein 3 family. The protein in the C-terminal section; belongs to the transglycosylase Slt family.

It is found in the cell outer membrane. It catalyses the reaction Exolytic cleavage of the (1-&gt;4)-beta-glycosidic linkage between N-acetylmuramic acid (MurNAc) and N-acetylglucosamine (GlcNAc) residues in peptidoglycan, from either the reducing or the non-reducing ends of the peptidoglycan chains, with concomitant formation of a 1,6-anhydrobond in the MurNAc residue.. Functionally, murein-degrading enzyme that degrades murein glycan strands and insoluble, high-molecular weight murein sacculi, with the concomitant formation of a 1,6-anhydromuramoyl product. Lytic transglycosylases (LTs) play an integral role in the metabolism of the peptidoglycan (PG) sacculus. Their lytic action creates space within the PG sacculus to allow for its expansion as well as for the insertion of various structures such as secretion systems and flagella. The chain is Membrane-bound lytic murein transglycosylase F from Marinobacter nauticus (strain ATCC 700491 / DSM 11845 / VT8) (Marinobacter aquaeolei).